We begin with the raw amino-acid sequence, 120 residues long: Small ribosomal subunit protein bS6 (120 aa).

Residues 97 to 112 (SNEPSPILKNQSTENT) are compositionally biased toward polar residues. The segment at 97 to 120 (SNEPSPILKNQSTENTPVIDVTAN) is disordered.

It belongs to the bacterial ribosomal protein bS6 family.

Its function is as follows. Binds together with bS18 to 16S ribosomal RNA. The protein is Small ribosomal subunit protein bS6 of Rickettsia bellii (strain OSU 85-389).